Reading from the N-terminus, the 273-residue chain is AECCGQKRSLSREALQKDLDDKLFGQHLAKKVILNAVSGFLSNPKPKKPLTLSLHGWTGTGKNFASKIIAENIYEGGLNSDYVHLFVATLHFPHASNVTLYKDQLQMWIRGNVSACARSIFIFDEMDKMHAGLIDAIKPFLDYYDVVDEVSYQKAIFIFLSNAGAERITDVALDFWKSGKQREEIKLRDMEHALAVSVFNNKNSGFWHSSLIDRNLIDYFVPFLPLEYKHLKMCIRVEMQSRGYEVDEDIISKVAEEMTFFPKEERVFSDKGC.

The tract at residues 45–205 (KPKKPLTLSL…VSVFNNKNSG (161 aa)) is interaction with SNAPIN. 56 to 63 (GWTGTGKN) is a binding site for ATP. N-linked (GlcNAc...) asparagine glycosylation is found at Asn-97 and Asn-112.

Belongs to the ClpA/ClpB family. Torsin subfamily. Homohexamer. Interacts with TOR1B; the interaction may be specific of neural tissues. Interacts (ATP-bound) with TOR1AIP1 and TOR1AIP2; the interactions induce ATPase activity. Interacts with KLHL14; preferentially when ATP-free. Interacts with KLC1 (via TPR repeats); the interaction associates TOR1A with the kinesin oligomeric complex. Interacts with COPS4; the interaction associates TOR1A with the CSN complex. Interacts with SNAPIN; the interaction is direct and associates SNAPIN with the CSN complex. Interacts with STON2. Interacts (ATP-bound) with SYNE3 (via KASH domain); the interaction is required for SYNE3 nuclear envelope localization. Interacts with VIM; the interaction associates TOR1A with the cytoskeleton. Interacts with PLEC. Interacts (ATP-bound) with SLC6A3; regulates SLC6A3 transport to the plasma membrane. N-glycosylated.

The protein localises to the endoplasmic reticulum lumen. It is found in the nucleus membrane. It localises to the cell projection. The protein resides in the growth cone. Its subcellular location is the cytoplasmic vesicle membrane. The protein localises to the synapse. It is found in the synaptosome. It localises to the cytoplasm. The protein resides in the cytoskeleton. The enzyme catalyses ATP + H2O = ADP + phosphate + H(+). Protein with chaperone functions important for the control of protein folding, processing, stability and localization as well as for the reduction of misfolded protein aggregates. Involved in the regulation of synaptic vesicle recycling, controls STON2 protein stability in collaboration with the COP9 signalosome complex (CSN). In the nucleus, may link the cytoskeleton with the nuclear envelope, this mechanism seems to be crucial for the control of nuclear polarity, cell movement and, specifically in neurons, nuclear envelope integrity. Participates in the cellular trafficking and may regulate the subcellular location of multipass membrane proteins such as the dopamine transporter SLC6A3, leading to the modulation of dopamine neurotransmission. In the endoplasmic reticulum, plays a role in the quality control of protein folding by increasing clearance of misfolded proteins such as SGCE variants or holding them in an intermediate state for proper refolding. May have a redundant function with TOR1B in non-neural tissues. The polypeptide is Torsin-1A (TOR1A) (Cricetus cricetus (Black-bellied hamster)).